The chain runs to 157 residues: Cytochrome b6-f complex subunit 4 (157 aa).

The next 3 helical transmembrane spans lie at isoleucine 35–valine 55, leucine 94–glutamate 114, and leucine 130–isoleucine 150.

This sequence belongs to the cytochrome b family. PetD subfamily. As to quaternary structure, the 4 large subunits of the cytochrome b6-f complex are cytochrome b6, subunit IV (17 kDa polypeptide, petD), cytochrome f and the Rieske protein, while the 4 small subunits are petG, petL, petM and petN. The complex functions as a dimer.

The protein resides in the plastid. Its subcellular location is the chloroplast thylakoid membrane. Its function is as follows. Component of the cytochrome b6-f complex, which mediates electron transfer between photosystem II (PSII) and photosystem I (PSI), cyclic electron flow around PSI, and state transitions. The sequence is that of Cytochrome b6-f complex subunit 4 from Amphidinium carterae (Dinoflagellate).